We begin with the raw amino-acid sequence, 221 residues long: UPF0758 protein CGSHiEE_07200 (221 aa).

Positions 99 to 221 (IINDPETVKL…CYSFAENCLL (123 aa)) constitute an MPN domain. Residues His170, His172, and Asp183 each coordinate Zn(2+). The short motif at 170–183 (HNHPSGVTEPSYSD) is the JAMM motif element.

It belongs to the UPF0758 family.

This chain is UPF0758 protein CGSHiEE_07200, found in Haemophilus influenzae (strain PittEE).